The sequence spans 255 residues: Triosephosphate isomerase (255 aa).

9–11 (NWK) is a substrate binding site. The active-site Electrophile is the His-95. The active-site Proton acceptor is Glu-167. Residues Gly-173, Ser-212, and 233–234 (GG) each bind substrate.

It belongs to the triosephosphate isomerase family. Homodimer.

The protein localises to the cytoplasm. The catalysed reaction is D-glyceraldehyde 3-phosphate = dihydroxyacetone phosphate. The protein operates within carbohydrate biosynthesis; gluconeogenesis. It functions in the pathway carbohydrate degradation; glycolysis; D-glyceraldehyde 3-phosphate from glycerone phosphate: step 1/1. Its function is as follows. Involved in the gluconeogenesis. Catalyzes stereospecifically the conversion of dihydroxyacetone phosphate (DHAP) to D-glyceraldehyde-3-phosphate (G3P). In Erwinia tasmaniensis (strain DSM 17950 / CFBP 7177 / CIP 109463 / NCPPB 4357 / Et1/99), this protein is Triosephosphate isomerase.